A 254-amino-acid polypeptide reads, in one-letter code: Acetylglutamate kinase (254 aa).

Residues 40-41, R62, and N158 each bind substrate; that span reads GG.

It belongs to the acetylglutamate kinase family. ArgB subfamily.

It localises to the cytoplasm. It carries out the reaction N-acetyl-L-glutamate + ATP = N-acetyl-L-glutamyl 5-phosphate + ADP. It functions in the pathway amino-acid biosynthesis; L-arginine biosynthesis; N(2)-acetyl-L-ornithine from L-glutamate: step 2/4. Its function is as follows. Catalyzes the ATP-dependent phosphorylation of N-acetyl-L-glutamate. This is Acetylglutamate kinase from Chloroflexus aurantiacus (strain ATCC 29366 / DSM 635 / J-10-fl).